We begin with the raw amino-acid sequence, 179 residues long: GTP-dependent dephospho-CoA kinase (179 aa).

Residues aspartate 49, valine 50, valine 51, aspartate 68, lysine 70, and glutamate 126 each contribute to the GTP site.

Belongs to the GTP-dependent DPCK family.

It carries out the reaction 3'-dephospho-CoA + GTP = GDP + CoA + H(+). Its pathway is cofactor biosynthesis; coenzyme A biosynthesis. Functionally, catalyzes the GTP-dependent phosphorylation of the 3'-hydroxyl group of dephosphocoenzyme A to form coenzyme A (CoA). The protein is GTP-dependent dephospho-CoA kinase of Pyrococcus abyssi (strain GE5 / Orsay).